A 426-amino-acid polypeptide reads, in one-letter code: Serine--tRNA ligase (426 aa).

227–229 (TSE) provides a ligand contact to L-serine. ATP is bound by residues 258–260 (RKE) and V274. E281 contacts L-serine. Position 345-348 (345-348 (ELTS)) interacts with ATP. An L-serine-binding site is contributed by T380.

It belongs to the class-II aminoacyl-tRNA synthetase family. Type-1 seryl-tRNA synthetase subfamily. Homodimer. The tRNA molecule binds across the dimer.

The protein localises to the cytoplasm. The enzyme catalyses tRNA(Ser) + L-serine + ATP = L-seryl-tRNA(Ser) + AMP + diphosphate + H(+). The catalysed reaction is tRNA(Sec) + L-serine + ATP = L-seryl-tRNA(Sec) + AMP + diphosphate + H(+). The protein operates within aminoacyl-tRNA biosynthesis; selenocysteinyl-tRNA(Sec) biosynthesis; L-seryl-tRNA(Sec) from L-serine and tRNA(Sec): step 1/1. In terms of biological role, catalyzes the attachment of serine to tRNA(Ser). Is also able to aminoacylate tRNA(Sec) with serine, to form the misacylated tRNA L-seryl-tRNA(Sec), which will be further converted into selenocysteinyl-tRNA(Sec). The sequence is that of Serine--tRNA ligase from Clavibacter sepedonicus (Clavibacter michiganensis subsp. sepedonicus).